The primary structure comprises 251 residues: CDP-diacylglycerol pyrophosphatase (251 aa).

A helical transmembrane segment spans residues 4 to 24 (AGLLFLVMIVIAVVAAGIGYW).

Belongs to the Cdh family.

Its subcellular location is the cell inner membrane. The catalysed reaction is a CDP-1,2-diacyl-sn-glycerol + H2O = a 1,2-diacyl-sn-glycero-3-phosphate + CMP + 2 H(+). Its pathway is phospholipid metabolism; CDP-diacylglycerol degradation; phosphatidate from CDP-diacylglycerol: step 1/1. The polypeptide is CDP-diacylglycerol pyrophosphatase (Escherichia coli (strain ATCC 8739 / DSM 1576 / NBRC 3972 / NCIMB 8545 / WDCM 00012 / Crooks)).